Reading from the N-terminus, the 325-residue chain is Beta-ketoacyl-[acyl-carrier-protein] synthase III (325 aa).

Residues cysteine 112 and histidine 250 contribute to the active site. The ACP-binding stretch occupies residues 251 to 255 (QANSR). The active site involves asparagine 280.

It belongs to the thiolase-like superfamily. FabH family. As to quaternary structure, homodimer.

Its subcellular location is the cytoplasm. It catalyses the reaction malonyl-[ACP] + acetyl-CoA + H(+) = 3-oxobutanoyl-[ACP] + CO2 + CoA. The protein operates within lipid metabolism; fatty acid biosynthesis. Its function is as follows. Catalyzes the condensation reaction of fatty acid synthesis by the addition to an acyl acceptor of two carbons from malonyl-ACP. Catalyzes the first condensation reaction which initiates fatty acid synthesis and may therefore play a role in governing the total rate of fatty acid production. Possesses both acetoacetyl-ACP synthase and acetyl transacylase activities. Its substrate specificity determines the biosynthesis of branched-chain and/or straight-chain of fatty acids. This Lactococcus lactis subsp. cremoris (strain SK11) protein is Beta-ketoacyl-[acyl-carrier-protein] synthase III.